A 408-amino-acid polypeptide reads, in one-letter code: Serine/threonine transporter SstT (408 aa).

9 consecutive transmembrane segments (helical) span residues 11-31 (LANGSLVLQILLGIAAGVILA), 43-63 (FLGSLFVGALKAIAPILVFIL), 81-101 (PIVVLYLFGTFAAALTAVVLS), 141-161 (ALMTGNYIGILAWGVGLGLAL), 192-212 (IGIFGLVAATFAETGFAAIAG), 216-236 (LLAVLLSAMAIIALIVNPLIV), 298-318 (MGGAAITITVLTLAAVHTLGI), 330-350 (VVAAVSACGASGVAGGSLLLI), and 357-377 (FGISNDIAMQVVAVGFIIGVI).

The protein belongs to the dicarboxylate/amino acid:cation symporter (DAACS) (TC 2.A.23) family.

It is found in the cell inner membrane. The enzyme catalyses L-serine(in) + Na(+)(in) = L-serine(out) + Na(+)(out). It carries out the reaction L-threonine(in) + Na(+)(in) = L-threonine(out) + Na(+)(out). In terms of biological role, involved in the import of serine and threonine into the cell, with the concomitant import of sodium (symport system). In Shewanella sp. (strain W3-18-1), this protein is Serine/threonine transporter SstT.